We begin with the raw amino-acid sequence, 156 residues long: Small ribosomal subunit protein uS7c (156 aa).

Belongs to the universal ribosomal protein uS7 family. In terms of assembly, part of the 30S ribosomal subunit.

The protein resides in the plastid. It is found in the chloroplast. Functionally, one of the primary rRNA binding proteins, it binds directly to 16S rRNA where it nucleates assembly of the head domain of the 30S subunit. The sequence is that of Small ribosomal subunit protein uS7c (rps7) from Thalassiosira pseudonana (Marine diatom).